Reading from the N-terminus, the 235-residue chain is RNA polymerase sigma-E factor (235 aa).

The Polymerase core binding signature appears at 82–95; that stretch reads DLISVGTIGLIKAV. A DNA-binding region (H-T-H motif) is located at residues 202 to 221; sequence QKEVADMLGISQSYISRLEK.

This sequence belongs to the sigma-70 factor family.

Sigma factors are initiation factors that promote the attachment of RNA polymerase to specific initiation sites and are then released. This sigma factor is responsible for the expression of sporulation specific genes. In Clostridium acetobutylicum (strain ATCC 824 / DSM 792 / JCM 1419 / IAM 19013 / LMG 5710 / NBRC 13948 / NRRL B-527 / VKM B-1787 / 2291 / W), this protein is RNA polymerase sigma-E factor (sigE).